The primary structure comprises 347 residues: Methionine import ATP-binding protein MetN (347 aa).

The ABC transporter domain maps to 2-241; that stretch reads IKLEGVSKTY…PATRLGRDFL (240 aa). Residue 38-45 coordinates ATP; that stretch reads GLSGAGKS.

Belongs to the ABC transporter superfamily. Methionine importer (TC 3.A.1.24) family. The complex is composed of two ATP-binding proteins (MetN), two transmembrane proteins (MetI) and a solute-binding protein (MetQ).

The protein localises to the cell inner membrane. It carries out the reaction L-methionine(out) + ATP + H2O = L-methionine(in) + ADP + phosphate + H(+). The catalysed reaction is D-methionine(out) + ATP + H2O = D-methionine(in) + ADP + phosphate + H(+). Functionally, part of the ABC transporter complex MetNIQ involved in methionine import. Responsible for energy coupling to the transport system. The sequence is that of Methionine import ATP-binding protein MetN from Chromohalobacter salexigens (strain ATCC BAA-138 / DSM 3043 / CIP 106854 / NCIMB 13768 / 1H11).